The sequence spans 596 residues: MSRKSALESSASVLAQADVGASGIHPSVIADAMGDSASAEALERLNRAAQDTKNVDNAKHLARAIQAVQLQDYAKADKLALKLLEKDERLGLAWHILAIAREKTGDFASSLRAYEAALALLPDHGPVAGDLGRLAFRMNMPELAAKFFAHYRLARPDDVEGANNLACALRELNRESEAIEVLKAALGANPEAAVLWNTLGTVLCNIGDAAGSIVFFDESLRLAPDFSKAYHNRAFARLDLGEIEAALADCEAAMRSPGSPEDLAMMQFARATILLALGRVGEGWEAYESRFSPALSDAPRFQIPGVRWSGQDLRGKRLMITTEQGLGDEVMFANMLPDIVEALGPDGFLSLAVERRLAPLFERTFPKVEVTAHRTIAYEGRVFRAAPYIENWDRFDYWAAIGDFLPSLRPTAEAFPKRNAFLQPDPARVAHWKAQLEKLGPGPKVGLLWKSLKLNAERARQFSPFHLWEPVLHTPGVVFVNLQYGDCEEEIAFAKEELGVEIWQPEGIDLKADLDDVAALCAAVDLVIGFSNATINLAGAVGTPIFMLTGASSWTRLGTEYYPWYPSVRCFVTEQYGVWEPTMGRVATALRDFAAS.

TPR repeat units lie at residues 91–124 (GLAW…LPDH), 159–192 (VEGA…NPEA), 193–226 (AVLW…APDF), and 228–260 (KAYH…PGSP).

The protein is Protein FlbA (flbA) of Caulobacter vibrioides (strain ATCC 19089 / CIP 103742 / CB 15) (Caulobacter crescentus).